The primary structure comprises 266 residues: Undecaprenyl-diphosphatase (266 aa).

8 helical membrane-spanning segments follow: residues 1-21 (MDTFQVIILALIQGLTEFLPI), 39-59 (QGLSFDVAVNTGSLLAVVMYF), 87-107 (WWIILATIPAVIIGFSAKDFI), 111-131 (FRSIEVIAATTIIFGLLLWWA), 144-164 (VGWKKALVIGIAQAMALIPGT), 183-203 (AAARFSFLMSVPVSLGAAILV), 218-238 (ALGLGILVSFIAAYICIHYFL), and 246-266 (MTPFVIYRLALGAVLCWIIFL).

This sequence belongs to the UppP family.

The protein resides in the cell inner membrane. It carries out the reaction di-trans,octa-cis-undecaprenyl diphosphate + H2O = di-trans,octa-cis-undecaprenyl phosphate + phosphate + H(+). Its function is as follows. Catalyzes the dephosphorylation of undecaprenyl diphosphate (UPP). Confers resistance to bacitracin. The sequence is that of Undecaprenyl-diphosphatase from Shewanella pealeana (strain ATCC 700345 / ANG-SQ1).